The chain runs to 418 residues: Nuclear hormone receptor family member nhr-209 (418 aa).

A DNA-binding region (nuclear receptor) is located at residues 43–121 (PEKCAVCKNA…VGMDSTAIRA (79 aa)). 2 consecutive NR C4-type zinc fingers follow at residues 46-66 (CAVC…CNGC) and 82-104 (CMNH…CKGC). Residues 174 to 414 (TIPDGFEDMR…SHPPKSLFDE (241 aa)) enclose the NR LBD domain. An AF-2 region spans residues 403 to 414 (ECSHPPKSLFDE).

This sequence belongs to the nuclear hormone receptor family.

Its subcellular location is the nucleus. Its function is as follows. Transcriptional regulator. Plays a role in modulation of lifespan and immunity. The sequence is that of Nuclear hormone receptor family member nhr-209 from Caenorhabditis elegans.